Reading from the N-terminus, the 188-residue chain is UPF0301 protein XAC2918 (188 aa).

This sequence belongs to the UPF0301 (AlgH) family.

This Xanthomonas axonopodis pv. citri (strain 306) protein is UPF0301 protein XAC2918.